The sequence spans 448 residues: Zinc finger CCCH domain-containing protein 43 (448 aa).

The tract at residues 1–106 is disordered; the sequence is MVNSEEIADG…GWSENESENV (106 aa). A compositionally biased stretch (basic and acidic residues) spans 24–45; the sequence is SSHDRSLSDLNHAAEDLSDKLK. Polar residues predominate over residues 63-79; it reads VSESNGGLDSNAVVTIN. Residues 80–89 show a composition bias toward acidic residues; sequence QEEEEEEEDR. 5 consecutive C3H1-type zinc fingers follow at residues 110-138, 158-186, 204-232, 346-374, and 392-420; these read RPGA…HPLA, KLGL…HTIP, RPGE…HPDP, RPDQ…HPKN, and RPDQ…HSVQ. The disordered stretch occupies residues 424-448; sequence STESSQAIVEPPQVSANGNESDGWN. A compositionally biased stretch (polar residues) spans 437–448; the sequence is VSANGNESDGWN.

It is found in the nucleus. This chain is Zinc finger CCCH domain-containing protein 43, found in Arabidopsis thaliana (Mouse-ear cress).